A 171-amino-acid chain; its full sequence is Peptide deformylase (171 aa).

C92 and H134 together coordinate Fe cation. E135 is a catalytic residue. H138 is a Fe cation binding site.

This sequence belongs to the polypeptide deformylase family. Fe(2+) is required as a cofactor.

It carries out the reaction N-terminal N-formyl-L-methionyl-[peptide] + H2O = N-terminal L-methionyl-[peptide] + formate. Functionally, removes the formyl group from the N-terminal Met of newly synthesized proteins. Requires at least a dipeptide for an efficient rate of reaction. N-terminal L-methionine is a prerequisite for activity but the enzyme has broad specificity at other positions. The sequence is that of Peptide deformylase from Polynucleobacter necessarius subsp. necessarius (strain STIR1).